The chain runs to 416 residues: PRKCA-binding protein (416 aa).

Positions 22-105 (KVTLQKDAQN…EVTIHYNKLQ (84 aa)) constitute a PDZ domain. The Zn(2+) site is built by Cys-44 and Cys-46. Thr-82 is modified (phosphothreonine). The AH domain occupies 144-357 (LCNDGLVKRL…CYAVLQDADV (214 aa)). The segment at 373–416 (PNQGSFTDGEEEDEEEEDGAAREVSKDACGATGPTDKGGSWCDS) is disordered. Residues 380-390 (DGEEEDEEEED) show a composition bias toward acidic residues. Cys-414 carries S-palmitoyl cysteine; by DHHC8 lipidation.

Monomer and homodimer. Interacts with CXADR. Interacts presynaptically with the glutamate receptors GRIA2, GRIA3, GRIK3, isoform 3 of GRIA4, isoform A of GRM4, GRM7 and GRM8; with NAPA and NAPB; and with BTG2. The interaction with NAPA and NAPB disrupts the interaction with GRIA2, conducting to the internalization of GRIA2. Interacts with PRKCA; with the amine transporters SLC6A2 and SLC6A3; with the channels ASIC1 and ASIC2; with the GTP-binding proteins ARF1 and ARF3; with the ephrin receptor tyrosine kinases EPHA7, EPHB1 and EPHB2; with ERBB2 and through its PDZ domain with the C-terminal tail of PRLHR. Interacts with UNC5A. Interacts (via AH domain) with NCS1/FREQ; in a calcium-dependent manner. Interacts with F-actin and associates with the ARP2/3 complex. Interacts (via PDZ domain) with ARF1 (activated); the interaction blocks Arp2/3 complex inhibition. Interacts with SORCS3. Post-translationally, phosphorylation at Thr-82 appears to inhibit the interaction with AMPA receptors. Phosphorylated on tyrosine residues by EPHB2 and on serine or threonine residues by PKC. In terms of processing, palmitoylation on Cys-414 is essential for long-term synaptic depression (LTD). Expressed in all tissues examined, with highest levels in brain and testes and lowest levels in lung.

Its subcellular location is the cytoplasm. The protein resides in the perinuclear region. It localises to the membrane. It is found in the postsynaptic density. The protein localises to the synapse. Its subcellular location is the synaptosome. The protein resides in the cytoskeleton. Functionally, probable adapter protein that bind to and organize the subcellular localization of a variety of membrane proteins containing some PDZ recognition sequence. Involved in the clustering of various receptors, possibly by acting at the receptor internalization level. Plays a role in synaptic plasticity by regulating the trafficking and internalization of AMPA receptors. May be regulated upon PRKCA activation. May regulate ASIC1/ASIC3 channel. Regulates actin polymerization by inhibiting the actin-nucleating activity of the Arp2/3 complex; the function is competitive with nucleation promoting factors and is linked to neuronal morphology regulation and AMPA receptor (AMPAR) endocytosis. Via interaction with the Arp2/3 complex involved in regulation of synaptic plasicity of excitatory synapses and required for spine shrinkage during long-term depression (LTD). Involved in regulation of astrocyte morphology, antagonistic to Arp2/3 complex activator WASL/N-WASP function. This chain is PRKCA-binding protein (Pick1), found in Mus musculus (Mouse).